A 319-amino-acid polypeptide reads, in one-letter code: Zinc finger protein C19B12.07c (319 aa).

The segment at 146–170 (FRCLCCHVPCKNKKLLREHMNNKRH) adopts a C2H2-type zinc-finger fold.

It belongs to the ZNF277 family.

Its subcellular location is the nucleus. The polypeptide is Zinc finger protein C19B12.07c (Schizosaccharomyces pombe (strain 972 / ATCC 24843) (Fission yeast)).